The primary structure comprises 282 residues: Shikimate dehydrogenase (NADP(+)) (282 aa).

Shikimate-binding positions include 19–21 (TQS) and threonine 66. Lysine 70 functions as the Proton acceptor in the catalytic mechanism. Positions 91 and 107 each coordinate shikimate. NADP(+) is bound by residues 132-136 (GAGGA), 155-160 (NRTITR), isoleucine 224, and glycine 246.

It belongs to the shikimate dehydrogenase family. As to quaternary structure, homodimer.

The catalysed reaction is shikimate + NADP(+) = 3-dehydroshikimate + NADPH + H(+). Its pathway is metabolic intermediate biosynthesis; chorismate biosynthesis; chorismate from D-erythrose 4-phosphate and phosphoenolpyruvate: step 4/7. Functionally, involved in the biosynthesis of the chorismate, which leads to the biosynthesis of aromatic amino acids. Catalyzes the reversible NADPH linked reduction of 3-dehydroshikimate (DHSA) to yield shikimate (SA). The protein is Shikimate dehydrogenase (NADP(+)) of Buchnera aphidicola subsp. Baizongia pistaciae (strain Bp).